The primary structure comprises 570 residues: Peptidyl-prolyl cis-trans isomerase FKBP9 (570 aa).

Positions 1-24 are cleaved as a signal peptide; the sequence is MALGARGWRRRSLLLLLLWVTGQA. 4 consecutive PPIase FKBP-type domains span residues 54–142, 166–254, 278–365, and 389–477; these read GDFV…VDIW, SDFV…LDLH, GDFL…IDFH, and GDYL…LELV. Asn-174, Asn-286, Asn-302, and Asn-397 each carry an N-linked (GlcNAc...) asparagine glycan. EF-hand domains are found at residues 488–523 and 533–568; these read WNGE…QVAT and NAEM…AKHD. Asp-501, Asp-503, Asn-505, Glu-507, Glu-512, Asp-546, Asn-548, Asp-550, Lys-552, and Glu-557 together coordinate Ca(2+). The short motif at 567-570 is the Prevents secretion from ER element; sequence HDEL.

Phosphorylated. As to expression, predominantly expressed in heart, skeletal muscle, lung, liver and kidney. Lower levels found in brain, spleen and testis.

Its subcellular location is the endoplasmic reticulum lumen. The enzyme catalyses [protein]-peptidylproline (omega=180) = [protein]-peptidylproline (omega=0). With respect to regulation, inhibited by FK506. Its function is as follows. PPIases accelerate the folding of proteins during protein synthesis. In Mus musculus (Mouse), this protein is Peptidyl-prolyl cis-trans isomerase FKBP9 (Fkbp9).